Consider the following 203-residue polypeptide: Glycerol-3-phosphate acyltransferase (203 aa).

4 helical membrane-spanning segments follow: residues 3–23 (LASALVLGAYLLGSVSTAILV), 75–95 (LGLEPVWIAAVALAAFLGHLF), 113–133 (VILGIQAWVGLAALATWLIVA), and 156–176 (LLTGERWYVAAGVLLAALIYW).

The protein belongs to the PlsY family. As to quaternary structure, probably interacts with PlsX.

It localises to the cell inner membrane. It carries out the reaction an acyl phosphate + sn-glycerol 3-phosphate = a 1-acyl-sn-glycero-3-phosphate + phosphate. The protein operates within lipid metabolism; phospholipid metabolism. Functionally, catalyzes the transfer of an acyl group from acyl-phosphate (acyl-PO(4)) to glycerol-3-phosphate (G3P) to form lysophosphatidic acid (LPA). This enzyme utilizes acyl-phosphate as fatty acyl donor, but not acyl-CoA or acyl-ACP. This chain is Glycerol-3-phosphate acyltransferase, found in Thioalkalivibrio sulfidiphilus (strain HL-EbGR7).